A 328-amino-acid polypeptide reads, in one-letter code: Cell division protein ZipA (328 aa).

Residues 1–4 are Periplasmic-facing; it reads MDLN. Residues 5–25 traverse the membrane as a helical segment; the sequence is TILIIVGIVALVALIVHGLWS. At 26-328 the chain is on the cytoplasmic side; the sequence is NRREKSKYFD…NAEQAYLARV (303 aa). The disordered stretch occupies residues 44–82; sequence SLTSRSHTQEEMVQPNNISPNTYVENGHTPISQPTTEKL. The span at 57–81 shows a compositional bias: polar residues; it reads QPNNISPNTYVENGHTPISQPTTEK.

It belongs to the ZipA family. Interacts with FtsZ via their C-terminal domains.

Its subcellular location is the cell inner membrane. In terms of biological role, essential cell division protein that stabilizes the FtsZ protofilaments by cross-linking them and that serves as a cytoplasmic membrane anchor for the Z ring. Also required for the recruitment to the septal ring of downstream cell division proteins. The chain is Cell division protein ZipA from Haemophilus influenzae (strain PittGG).